The following is a 119-amino-acid chain: Large ribosomal subunit protein uL18 (119 aa).

This sequence belongs to the universal ribosomal protein uL18 family. Part of the 50S ribosomal subunit; part of the 5S rRNA/L5/L18/L25 subcomplex. Contacts the 5S and 23S rRNAs.

In terms of biological role, this is one of the proteins that bind and probably mediate the attachment of the 5S RNA into the large ribosomal subunit, where it forms part of the central protuberance. The protein is Large ribosomal subunit protein uL18 of Clostridium beijerinckii (strain ATCC 51743 / NCIMB 8052) (Clostridium acetobutylicum).